A 308-amino-acid polypeptide reads, in one-letter code: Porphobilinogen deaminase (308 aa).

At C240 the chain carries S-(dipyrrolylmethanemethyl)cysteine.

This sequence belongs to the HMBS family. As to quaternary structure, monomer. It depends on dipyrromethane as a cofactor.

It catalyses the reaction 4 porphobilinogen + H2O = hydroxymethylbilane + 4 NH4(+). It participates in porphyrin-containing compound metabolism; protoporphyrin-IX biosynthesis; coproporphyrinogen-III from 5-aminolevulinate: step 2/4. Functionally, tetrapolymerization of the monopyrrole PBG into the hydroxymethylbilane pre-uroporphyrinogen in several discrete steps. In Maridesulfovibrio salexigens (strain ATCC 14822 / DSM 2638 / NCIMB 8403 / VKM B-1763) (Desulfovibrio salexigens), this protein is Porphobilinogen deaminase.